Consider the following 31-residue polypeptide: Cytochrome b6-f complex subunit 6 (31 aa).

The chain crosses the membrane as a helical span at residues 4-24 (LISYISLLAGFVIIASVFYLA).

It belongs to the PetL family. As to quaternary structure, the 4 large subunits of the cytochrome b6-f complex are cytochrome b6, subunit IV (17 kDa polypeptide, PetD), cytochrome f and the Rieske protein, while the 4 small subunits are PetG, PetL, PetM and PetN. The complex functions as a dimer.

Its subcellular location is the plastid. It localises to the chloroplast thylakoid membrane. Component of the cytochrome b6-f complex, which mediates electron transfer between photosystem II (PSII) and photosystem I (PSI), cyclic electron flow around PSI, and state transitions. PetL is important for photoautotrophic growth as well as for electron transfer efficiency and stability of the cytochrome b6-f complex. The sequence is that of Cytochrome b6-f complex subunit 6 from Tupiella akineta (Green alga).